A 364-amino-acid chain; its full sequence is Alanine racemase (364 aa).

Lys35 acts as the Proton acceptor; specific for D-alanine in catalysis. Lys35 is modified (N6-(pyridoxal phosphate)lysine). Arg132 contacts substrate. Tyr260 serves as the catalytic Proton acceptor; specific for L-alanine. Residue Met308 participates in substrate binding.

This sequence belongs to the alanine racemase family. Requires pyridoxal 5'-phosphate as cofactor.

The enzyme catalyses L-alanine = D-alanine. It participates in amino-acid biosynthesis; D-alanine biosynthesis; D-alanine from L-alanine: step 1/1. In terms of biological role, catalyzes the interconversion of L-alanine and D-alanine. May also act on other amino acids. The polypeptide is Alanine racemase (alr) (Acidithiobacillus ferrooxidans (strain ATCC 23270 / DSM 14882 / CIP 104768 / NCIMB 8455) (Ferrobacillus ferrooxidans (strain ATCC 23270))).